The sequence spans 103 residues: Large ribosomal subunit protein uL24 (103 aa).

This sequence belongs to the universal ribosomal protein uL24 family. In terms of assembly, part of the 50S ribosomal subunit.

One of two assembly initiator proteins, it binds directly to the 5'-end of the 23S rRNA, where it nucleates assembly of the 50S subunit. In terms of biological role, one of the proteins that surrounds the polypeptide exit tunnel on the outside of the subunit. The chain is Large ribosomal subunit protein uL24 from Oceanobacillus iheyensis (strain DSM 14371 / CIP 107618 / JCM 11309 / KCTC 3954 / HTE831).